We begin with the raw amino-acid sequence, 156 residues long: MSRRHRAEKREINPDPKFGDLVITKFMNAIMFDGKKSVAERIVYGALDVVESKVKSDPVVLFHQALENVAPHIEVRSRRVGGATYQVPVDVRPDRRRALAVRWLITAARGRNETTMINRLAGELMDAANNRGSAVKKREDVHRMAEANRAFSHYRW.

This sequence belongs to the universal ribosomal protein uS7 family. Part of the 30S ribosomal subunit. Contacts proteins S9 and S11.

Its function is as follows. One of the primary rRNA binding proteins, it binds directly to 16S rRNA where it nucleates assembly of the head domain of the 30S subunit. Is located at the subunit interface close to the decoding center, probably blocks exit of the E-site tRNA. This chain is Small ribosomal subunit protein uS7, found in Bartonella quintana (strain Toulouse) (Rochalimaea quintana).